Consider the following 393-residue polypeptide: 2-nitroimidazole transporter (393 aa).

At 1–12 (MTCSTSLSGKNR) the chain is on the cytoplasmic side. The chain crosses the membrane as a helical span at residues 13–33 (IVLIAGILMIATTLRVTFTGA). At 34–52 (APLLDTIRSAYSLTTAQTG) the chain is on the periplasmic side. A helical transmembrane segment spans residues 53 to 73 (LLTTLPLLAFALISPLAAPVA). The Cytoplasmic segment spans residues 74–80 (RRFGMER). The next 2 membrane-spanning stretches (helical) occupy residues 81–101 (SLFA…LPSP) and 102–122 (YLLF…NVLL). At 123–140 (PGLIKRDFPHSVARLTGA) the chain is on the cytoplasmic side. A helical transmembrane segment spans residues 141-161 (YSLTMGAAAALGSAMVVPLAL). The Periplasmic segment spans residues 162-163 (NG). The chain crosses the membrane as a helical span at residues 164-184 (FGWQGALLMLMCFPLLALFLW). Residues 185 to 218 (LPQWRSQQHANLSTSRALHTRGIWRSPLAWQVTL) are Cytoplasmic-facing. A helical membrane pass occupies residues 219–239 (FLGINSLVYYVIIGWLPAILI). At 240-249 (SHGYSEAQAG) the chain is on the periplasmic side. A helical transmembrane segment spans residues 250–270 (SLHGLLQLATAAPGLLIPLFL). Residues 271-278 (HHVKDQRG) lie on the Cytoplasmic side of the membrane. A helical transmembrane segment spans residues 279 to 299 (IAAFVALMCAVGAVGLCFMPA). Residues 300-304 (HAITW) lie on the Periplasmic side of the membrane. The helical transmembrane segment at 305 to 325 (TLLFGFGSGATMILGLTFIGL) threads the bilayer. The Cytoplasmic portion of the chain corresponds to 326-334 (RASSAHQAA). Residues 335 to 355 (ALSGMAQSVGYLLAACGPPLM) traverse the membrane as a helical segment. Topologically, residues 356-366 (GKIHDANGNWS) are periplasmic. A helical membrane pass occupies residues 367-387 (VPLMGVAILSLLMAIFGLCAG). Over 388-393 (RDKEIR) the chain is Cytoplasmic.

It belongs to the major facilitator superfamily. Cyanate porter (TC 2.A.1.17) family.

The protein resides in the cell inner membrane. Its function is as follows. Involved in efflux of 2-nitroimidazole. The polypeptide is 2-nitroimidazole transporter (Escherichia coli (strain K12)).